The primary structure comprises 94 residues: DNA-directed RNA polymerase subunit omega (94 aa).

The protein belongs to the RNA polymerase subunit omega family. As to quaternary structure, the RNAP catalytic core consists of 2 alpha, 1 beta, 1 beta' and 1 omega subunit. When a sigma factor is associated with the core the holoenzyme is formed, which can initiate transcription.

The enzyme catalyses RNA(n) + a ribonucleoside 5'-triphosphate = RNA(n+1) + diphosphate. In terms of biological role, promotes RNA polymerase assembly. Latches the N- and C-terminal regions of the beta' subunit thereby facilitating its interaction with the beta and alpha subunits. The chain is DNA-directed RNA polymerase subunit omega from Limosilactobacillus fermentum (strain NBRC 3956 / LMG 18251) (Lactobacillus fermentum).